A 205-amino-acid chain; its full sequence is Recombination protein RecR (205 aa).

A C4-type zinc finger spans residues 60-75; sequence CKVCHNISDTETCQIC. The region spanning 83-178 is the Toprim domain; the sequence is STVCVVENIR…KLSVIARGIS (96 aa).

It belongs to the RecR family.

May play a role in DNA repair. It seems to be involved in an RecBC-independent recombinational process of DNA repair. It may act with RecF and RecO. The sequence is that of Recombination protein RecR from Bacteroides thetaiotaomicron (strain ATCC 29148 / DSM 2079 / JCM 5827 / CCUG 10774 / NCTC 10582 / VPI-5482 / E50).